Reading from the N-terminus, the 316-residue chain is Coproporphyrin III ferrochelatase (316 aa).

Fe-coproporphyrin III is bound by residues Tyr-13, Arg-30, 46–47 (RY), Ser-54, and Tyr-125. Fe(2+)-binding residues include His-183 and Glu-264.

The protein belongs to the ferrochelatase family.

It is found in the cytoplasm. It carries out the reaction Fe-coproporphyrin III + 2 H(+) = coproporphyrin III + Fe(2+). Its pathway is porphyrin-containing compound metabolism; protoheme biosynthesis. In terms of biological role, involved in coproporphyrin-dependent heme b biosynthesis. Catalyzes the insertion of ferrous iron into coproporphyrin III to form Fe-coproporphyrin III. This chain is Coproporphyrin III ferrochelatase, found in Geobacillus kaustophilus (strain HTA426).